A 74-amino-acid chain; its full sequence is Kappa-scoloptoxin(07)-Ssm2c (74 aa).

The signal sequence occupies residues 1–19 (MLVFYAPLFVSIFSNTVMG). Residues 20–41 (ATIDKPIPKPILREAIEKIAVN) constitute a propeptide that is removed on maturation.

Belongs to the scoloptoxin-07 family. Contains 3 disulfide bonds. Expressed by the venom gland.

The protein resides in the secreted. Inhibits voltage-gated potassium channels. This Scolopendra mutilans (Chinese red-headed centipede) protein is Kappa-scoloptoxin(07)-Ssm2c.